Consider the following 159-residue polypeptide: Ribosome maturation factor RimP (159 aa).

The protein belongs to the RimP family.

It is found in the cytoplasm. In terms of biological role, required for maturation of 30S ribosomal subunits. The chain is Ribosome maturation factor RimP from Bordetella avium (strain 197N).